The primary structure comprises 437 residues: tRNA-2-methylthio-N(6)-dimethylallyladenosine synthase (437 aa).

An MTTase N-terminal domain is found at 2-117; sequence KHLYIKTFGC…LPQMIQRALD (116 aa). [4Fe-4S] cluster is bound by residues C11, C48, C80, C154, C158, and C161. The region spanning 140–372 is the Radical SAM core domain; it reads RAQGVVGQVT…QQLLNTQQLQ (233 aa). The TRAM domain occupies 375 to 437; that stretch reads KARVGRRESV…LPNSLRGRLV (63 aa).

This sequence belongs to the methylthiotransferase family. MiaB subfamily. In terms of assembly, monomer. [4Fe-4S] cluster serves as cofactor.

Its subcellular location is the cytoplasm. It carries out the reaction N(6)-dimethylallyladenosine(37) in tRNA + (sulfur carrier)-SH + AH2 + 2 S-adenosyl-L-methionine = 2-methylsulfanyl-N(6)-dimethylallyladenosine(37) in tRNA + (sulfur carrier)-H + 5'-deoxyadenosine + L-methionine + A + S-adenosyl-L-homocysteine + 2 H(+). Functionally, catalyzes the methylthiolation of N6-(dimethylallyl)adenosine (i(6)A), leading to the formation of 2-methylthio-N6-(dimethylallyl)adenosine (ms(2)i(6)A) at position 37 in tRNAs that read codons beginning with uridine. The sequence is that of tRNA-2-methylthio-N(6)-dimethylallyladenosine synthase from Magnetococcus marinus (strain ATCC BAA-1437 / JCM 17883 / MC-1).